The sequence spans 226 residues: PKHD-type hydroxylase Sde_2812 (226 aa).

The region spanning 78–178 is the Fe2OG dioxygenase domain; that stretch reads KIFPPLFNCY…RLASFFWLQS (101 aa). Positions 96, 98, and 159 each coordinate Fe cation. Residue arginine 169 participates in 2-oxoglutarate binding.

The cofactor is Fe(2+). Requires L-ascorbate as cofactor.

The chain is PKHD-type hydroxylase Sde_2812 from Saccharophagus degradans (strain 2-40 / ATCC 43961 / DSM 17024).